The sequence spans 703 residues: MIVKKYQMEVAGRPLIVEIGQVAQQANGAALMRYGDTVVLVTATAAKQPREGIDFFPLTVDYEEKQYAVGKIPGGFIKREGRATAQATLSARLIDRPIRPLFPKGFRNEIHVVATILSVEKDNAPDVTAITGASVALSISDIPFAGPVAAVIVGLVDGELIINPTVEQHQKSDLHLAVAGTKEAIMMVEGGANEVPEETMRDAIFFAHEEIKKIVDFQENIIREVGLSKMQVEIPILDEEIKKAVVEFATPLFEEAVKNPDKKTREDQMDSSQKSVLQHFTESYPEEEKLIADVSDETMKAVVRKMALEEGERVDGRKLDEIRKVSCEVGFLPRPHGSGLFTRGQTQVLSVTTLGAISEEQRLDGLGIEEKKRYIHHYNFPPYSTGETKPMRGPGRREIGHGALAERALLAVIPSEEEFPYTIRVVSEVLESNGSSSMGSVCGSTLSLMHAGVPIKAPVSGIAMGLVKEGERFAIMSDIQGIEDALGDMDFKLAGTEKGVTALQMDIKITGVNREIVEAALKQAREGRMFILKKMLEAIDKPNEELSPYAPQMIRMQIDPDKIREVIGPGGKTIHKIVDETGCKIDIEDDGSLFIMATDEEAAKKARFFVESIVAEVEVGKTYMGTVKRIMDFGAFVEIIPGVLGTSGKEGLVHISQLAEERVNKVRDVVDIGDQILVKVTEIDRQGRVNLSRKAVLKSAVKK.

2 residues coordinate Mg(2+): D484 and D490. Residues 551–610 (PQMIRMQIDPDKIREVIGPGGKTIHKIVDETGCKIDIEDDGSLFIMATDEEAAKKARFFV) enclose the KH domain. The 75-residue stretch at 620 to 694 (GKTYMGTVKR…RQGRVNLSRK (75 aa)) folds into the S1 motif domain.

The protein belongs to the polyribonucleotide nucleotidyltransferase family. Mg(2+) serves as cofactor.

Its subcellular location is the cytoplasm. It catalyses the reaction RNA(n+1) + phosphate = RNA(n) + a ribonucleoside 5'-diphosphate. Its function is as follows. Involved in mRNA degradation. Catalyzes the phosphorolysis of single-stranded polyribonucleotides processively in the 3'- to 5'-direction. In Syntrophomonas wolfei subsp. wolfei (strain DSM 2245B / Goettingen), this protein is Polyribonucleotide nucleotidyltransferase.